We begin with the raw amino-acid sequence, 396 residues long: Flap endonuclease 1 (396 aa).

Residues 1–105 (MGIHGLTKLL…DQLAQRTERR (105 aa)) form an N-domain region. Residue D34 participates in Mg(2+) binding. Residue R71 participates in DNA binding. 5 residues coordinate Mg(2+): D87, E159, E161, D180, and D182. The segment at 123–254 (AIEKYSKRSV…VRALQMIKKH (132 aa)) is I-domain. E159 contacts DNA. Residues G232 and D234 each contribute to the DNA site. D234 provides a ligand contact to Mg(2+). The segment at 338–346 (NQGRLESFF) is interaction with PCNA. Positions 341–396 (RLESFFTSLPKPATADKAKPKEDDKKRKAGAAAGGKDAKGGAAAKKGKFGVGGGKK) are disordered. Residues 354–366 (TADKAKPKEDDKK) show a composition bias toward basic and acidic residues. The segment covering 370 to 384 (GAAAGGKDAKGGAAA) has biased composition (low complexity).

Belongs to the XPG/RAD2 endonuclease family. FEN1 subfamily. Interacts with PCNA. Three molecules of FEN1 bind to one PCNA trimer with each molecule binding to one PCNA monomer. PCNA stimulates the nuclease activity without altering cleavage specificity. The cofactor is Mg(2+). Post-translationally, phosphorylated. Phosphorylation upon DNA damage induces relocalization to the nuclear plasma.

It localises to the nucleus. Its subcellular location is the nucleolus. The protein resides in the nucleoplasm. It is found in the mitochondrion. Its function is as follows. Structure-specific nuclease with 5'-flap endonuclease and 5'-3' exonuclease activities involved in DNA replication and repair. During DNA replication, cleaves the 5'-overhanging flap structure that is generated by displacement synthesis when DNA polymerase encounters the 5'-end of a downstream Okazaki fragment. It enters the flap from the 5'-end and then tracks to cleave the flap base, leaving a nick for ligation. Also involved in the long patch base excision repair (LP-BER) pathway, by cleaving within the apurinic/apyrimidinic (AP) site-terminated flap. Acts as a genome stabilization factor that prevents flaps from equilibrating into structures that lead to duplications and deletions. Also possesses 5'-3' exonuclease activity on nicked or gapped double-stranded DNA, and exhibits RNase H activity. Also involved in replication and repair of rDNA and in repairing mitochondrial DNA. In Chlamydomonas reinhardtii (Chlamydomonas smithii), this protein is Flap endonuclease 1.